The primary structure comprises 409 residues: Tyrosine--tRNA ligase (409 aa).

Y35 lines the L-tyrosine pocket. Positions 40 to 49 match the 'HIGH' region motif; that stretch reads CTAESLHVGS. Residues Y172 and Q176 each coordinate L-tyrosine. The short motif at 232–236 is the 'KMSKS' region element; it reads KMGKT. K235 provides a ligand contact to ATP. The S4 RNA-binding domain maps to 343–409; it reads ISILDLVILS…KKKHIKVELI (67 aa).

Belongs to the class-I aminoacyl-tRNA synthetase family. TyrS type 1 subfamily. Homodimer.

It is found in the cytoplasm. It carries out the reaction tRNA(Tyr) + L-tyrosine + ATP = L-tyrosyl-tRNA(Tyr) + AMP + diphosphate + H(+). Catalyzes the attachment of tyrosine to tRNA(Tyr) in a two-step reaction: tyrosine is first activated by ATP to form Tyr-AMP and then transferred to the acceptor end of tRNA(Tyr). The chain is Tyrosine--tRNA ligase from Pelagibacter ubique (strain HTCC1062).